The following is a 254-amino-acid chain: Alcohol dehydrogenase (254 aa).

NAD(+) is bound at residue 10 to 33 (FVAGLGGIGLDTSKGIVKAGPKNL). Ser138 is a substrate binding site. Tyr151 (proton acceptor) is an active-site residue.

The protein belongs to the short-chain dehydrogenases/reductases (SDR) family. Homodimer.

It carries out the reaction a primary alcohol + NAD(+) = an aldehyde + NADH + H(+). The enzyme catalyses a secondary alcohol + NAD(+) = a ketone + NADH + H(+). In Drosophila immigrans (Fruit fly), this protein is Alcohol dehydrogenase (Adh).